A 500-amino-acid chain; its full sequence is Cytochrome P450 11B2, mitochondrial (500 aa).

The transit peptide at 1–24 (MALRAKADVWLARPWQCLPRTRAL) directs the protein to the mitochondrion. Residue F381 participates in 21-hydroxyprogesterone binding. Heme is bound at residue C447.

Belongs to the cytochrome P450 family. It depends on heme as a cofactor. In terms of tissue distribution, adrenal gland.

The protein localises to the mitochondrion inner membrane. It catalyses the reaction a steroid + 2 reduced [adrenodoxin] + O2 + 2 H(+) = an 11beta-hydroxysteroid + 2 oxidized [adrenodoxin] + H2O. The enzyme catalyses 21-hydroxyprogesterone + 2 reduced [adrenodoxin] + O2 + 2 H(+) = corticosterone + 2 oxidized [adrenodoxin] + H2O. The catalysed reaction is corticosterone + 2 reduced [adrenodoxin] + O2 + 2 H(+) = 18-hydroxycorticosterone + 2 oxidized [adrenodoxin] + H2O. It carries out the reaction 18-hydroxycorticosterone + 2 reduced [adrenodoxin] + O2 + 2 H(+) = aldosterone + 2 oxidized [adrenodoxin] + 2 H2O. It catalyses the reaction 11-deoxycortisol + 2 reduced [adrenodoxin] + O2 + 2 H(+) = cortisol + 2 oxidized [adrenodoxin] + H2O. The enzyme catalyses 21-hydroxyprogesterone + 2 reduced [adrenodoxin] + O2 + 2 H(+) = 18-hydroxy-11-deoxycorticosterone + 2 oxidized [adrenodoxin] + H2O. The catalysed reaction is cortisol + 2 reduced [adrenodoxin] + O2 + 2 H(+) = 18-hydroxycortisol + 2 oxidized [adrenodoxin] + H2O. It carries out the reaction 18-hydroxycortisol + 2 reduced [adrenodoxin] + O2 + 2 H(+) = 18-oxocortisol + 2 oxidized [adrenodoxin] + 2 H2O. Its pathway is steroid biosynthesis. In terms of biological role, a cytochrome P450 monooxygenase that catalyzes the biosynthesis of aldosterone, the main mineralocorticoid in the human body responsible for salt and water homeostasis, thus involved in blood pressure regulation, arterial hypertension, and the development of heart failure. Catalyzes three sequential oxidative reactions of 11-deoxycorticosterone (21-hydroxyprogesterone), namely 11-beta hydroxylation, followed by two successive oxidations at C18 yielding 18-hydroxy and then 18-oxo intermediates (that would not leave the enzyme active site during the consecutive hydroxylation reactions), ending with the formation of aldosterone. Can also produce 18-hydroxycortisol and 18-oxocortisol, derived from successive oxidations of cortisol at C18, normally found at very low levels, but significantly increased in primary aldosteronism, the most common form of secondary hypertension. Mechanistically, uses molecular oxygen inserting one oxygen atom into a substrate and reducing the second into a water molecule. Two electrons are provided by NADPH via a two-protein mitochondrial transfer system comprising flavoprotein FDXR (adrenodoxin/ferredoxin reductase) and nonheme iron-sulfur protein FDX1 or FDX2 (adrenodoxin/ferredoxin). Could also be involved in the androgen metabolic pathway. The sequence is that of Cytochrome P450 11B2, mitochondrial (CYP11B2) from Mesocricetus auratus (Golden hamster).